A 136-amino-acid polypeptide reads, in one-letter code: Histone H2A (136 aa).

The span at 1-11 (MTGGKSAGGKA) shows a compositional bias: gly residues. The disordered stretch occupies residues 1–23 (MTGGKSAGGKAGTTKNAQSRSSK). Residues lysine 5 and lysine 10 each carry the N6-acetyllysine modification. Residue glutamine 107 is modified to N5-methylglutamine. Phosphoserine is present on serine 133. The [ST]-Q motif motif lies at 133-134 (SQ).

This sequence belongs to the histone H2A family. In terms of assembly, the nucleosome is a histone octamer containing two molecules each of H2A, H2B, H3 and H4 assembled in one H3-H4 heterotetramer and two H2A-H2B heterodimers. The octamer wraps approximately 147 bp of DNA. Phosphorylated to form H2AS128ph (gamma-H2A) in response to DNA double-strand breaks (DSBs) generated by exogenous genotoxic agents and by stalled replication forks. Phosphorylation is dependent on the DNA damage checkpoint kinases MEC1/ATR and TEL1/ATM, spreads on either side of a detected DSB site and may mark the surrounding chromatin for recruitment of proteins required for DNA damage signaling and repair. Gamma-H2A is removed from the DNA prior to the strand invasion-primer extension step of the repair process and subsequently dephosphorylated. Dephosphorylation is necessary for efficient recovery from the DNA damage checkpoint. In terms of processing, acetylated by ESA1 to form H2AK4ac and H2AK7ac.

The protein resides in the nucleus. It localises to the chromosome. In terms of biological role, core component of nucleosome which plays a central role in DNA double strand break (DSB) repair. Nucleosomes wrap and compact DNA into chromatin, limiting DNA accessibility to the cellular machineries which require DNA as a template. Histones thereby play a central role in transcription regulation, DNA repair, DNA replication and chromosomal stability. DNA accessibility is regulated via a complex set of post-translational modifications of histones, also called histone code, and nucleosome remodeling. The chain is Histone H2A (hta1) from Botryotinia fuckeliana (strain B05.10) (Noble rot fungus).